A 51-amino-acid polypeptide reads, in one-letter code: Large ribosomal subunit protein eL39 (51 aa).

The protein belongs to the eukaryotic ribosomal protein eL39 family. In terms of assembly, component of the large ribosomal subunit. Interacts with IMPACT.

The protein localises to the cytoplasm. Its function is as follows. RNA-binding component of the large ribosomal subunit. The ribosome is a large ribonucleoprotein complex responsible for the synthesis of proteins in the cell. In Mus musculus (Mouse), this protein is Large ribosomal subunit protein eL39 (Rpl39).